The chain runs to 574 residues: Acetolactate synthase isozyme 3 large subunit (574 aa).

A thiamine diphosphate-binding site is contributed by Glu51. FAD contacts are provided by residues Arg153, 261-282 (HGTY…VGVR), and 304-323 (DIDP…IVGD). The thiamine pyrophosphate binding stretch occupies residues 397–477 (QHQMFAALYY…VLVVNLNNRY (81 aa)). Positions 448 and 475 each coordinate Mg(2+).

The protein belongs to the TPP enzyme family. In terms of assembly, dimer of large and small chains. Mg(2+) serves as cofactor. The cofactor is thiamine diphosphate.

It catalyses the reaction 2 pyruvate + H(+) = (2S)-2-acetolactate + CO2. It functions in the pathway amino-acid biosynthesis; L-isoleucine biosynthesis; L-isoleucine from 2-oxobutanoate: step 1/4. Its pathway is amino-acid biosynthesis; L-valine biosynthesis; L-valine from pyruvate: step 1/4. With respect to regulation, sensitive to valine inhibition. The polypeptide is Acetolactate synthase isozyme 3 large subunit (ilvI) (Escherichia coli (strain K12)).